The chain runs to 1265 residues: Guanine nucleotide exchange factor SDC25 (1265 aa).

The SH3 domain occupies 26–97; it reads QPIDVVECTY…PPSFTRSILN (72 aa). Disordered regions lie at residues 409–454 and 623–648; these read IPAS…DTIW and LNLD…DEYE. Positions 416 to 428 are enriched in low complexity; sequence TSCSSETSHHSPS. The N-terminal Ras-GEF domain maps to 782-914; that stretch reads SNNRIKGGSK…LLKEVNQKFK (133 aa). Residues 952 to 1199 enclose the Ras-GEF domain; that stretch reads DPVLFATQLT…YQLSLIIEPK (248 aa). A disordered region spans residues 1201 to 1252; sequence RKKVVPNSNSNNKSQEKSRDDQTDEGKTSTKKDRFSKFQLHKTKKKAPKVSK. Positions 1214-1236 are enriched in basic and acidic residues; sequence SQEKSRDDQTDEGKTSTKKDRFS. A compositionally biased stretch (basic residues) spans 1239–1252; it reads QLHKTKKKAPKVSK.

Functionally, promotes the exchange of Ras-bound GDP by GTP. The sequence is that of Guanine nucleotide exchange factor SDC25 (SDC25) from Saccharomyces cerevisiae (strain AWRI1631) (Baker's yeast).